The following is a 155-amino-acid chain: uncharacterized protein (155 aa).

The 155-residue stretch at 1-155 (MIVKYIKGDI…IVIVDWEPLL (155 aa)) folds into the Macro domain.

This is an uncharacterized protein from Escherichia coli (Bacteriophage T4).